Consider the following 324-residue polypeptide: NADH-quinone oxidoreductase subunit H 2 (324 aa).

The next 9 membrane-spanning stretches (helical) occupy residues 1-21 (MIGM…LLVV), 77-97 (ILAP…VAFG), 109-129 (VMFL…GALA), 147-167 (LGYE…AGSL), 179-199 (VWFV…GVAA), 214-234 (LVAG…FLGE), 238-258 (VLLV…GPVW), 263-283 (LPGP…FIWI), and 298-318 (FAWK…GLIV).

This sequence belongs to the complex I subunit 1 family. As to quaternary structure, NDH-1 is composed of 14 different subunits. Subunits NuoA, H, J, K, L, M, N constitute the membrane sector of the complex.

The protein localises to the cell inner membrane. The catalysed reaction is a quinone + NADH + 5 H(+)(in) = a quinol + NAD(+) + 4 H(+)(out). Functionally, NDH-1 shuttles electrons from NADH, via FMN and iron-sulfur (Fe-S) centers, to quinones in the respiratory chain. The immediate electron acceptor for the enzyme in this species is believed to be ubiquinone. Couples the redox reaction to proton translocation (for every two electrons transferred, four hydrogen ions are translocated across the cytoplasmic membrane), and thus conserves the redox energy in a proton gradient. This subunit may bind ubiquinone. This Rhodopseudomonas palustris (strain BisB18) protein is NADH-quinone oxidoreductase subunit H 2.